Consider the following 564-residue polypeptide: MSSAQSSIDSDGDVRDADIHVAPPVEKEWSDGFDDNEVINGDNVEPPKRGLIGYLVIYLLCYPISFGGFLPGWDSGITAGFINMDNFKMNFGSYKHSTGEYYLSNVRMGLLVAMFSIGCAIGGLIFARLADTLGRRLAIVIVVLVYMVGAIIQISSNHKWYQYFVGKIIYGLGAGGCSVLCPMLLSEIAPTDLRGGLVSLYQLNMTFGIFLGYCSVYGTRKYDNTAQWRVPLGLCFLWALIIIIGMLLVPESPRYLIECERHEEARASIAKINKVSPEDPWVLKQADEINAGVLAQRELGEASWKELFSVKTKVLQRLITGILVQTFLQLTGENYFFFYGTTIFKSVGLTDGFETSIVLGTVNFFSTIIAVMVVDKIGRRKCLLFGAAGMMACMVIFASIGVKCLYPHGQDGPSSKGAGNAMIVFTCFYIFCFATTWAPVAYIVVAESFPSKVKSRAMSISTACNWLWQFLIGFFTPFITGSIHFYYGYVFVGCLVAMFLYVFFFLPETIGLSLEEIQLLYEEGIKPWKSASWVPPSRRGISSEESKTEKKDWKKFLKFSKNSD.

The Cytoplasmic portion of the chain corresponds to 1–52 (MSSAQSSIDSDGDVRDADIHVAPPVEKEWSDGFDDNEVINGDNVEPPKRGLI). A helical transmembrane segment spans residues 53 to 73 (GYLVIYLLCYPISFGGFLPGW). Residues 74–109 (DSGITAGFINMDNFKMNFGSYKHSTGEYYLSNVRMG) are Extracellular-facing. Residues 110–130 (LLVAMFSIGCAIGGLIFARLA) traverse the membrane as a helical segment. At 131–136 (DTLGRR) the chain is on the cytoplasmic side. The chain crosses the membrane as a helical span at residues 137-157 (LAIVIVVLVYMVGAIIQISSN). The Extracellular portion of the chain corresponds to 158–167 (HKWYQYFVGK). The chain crosses the membrane as a helical span at residues 168–188 (IIYGLGAGGCSVLCPMLLSEI). The Cytoplasmic portion of the chain corresponds to 189–194 (APTDLR). A helical membrane pass occupies residues 195-215 (GGLVSLYQLNMTFGIFLGYCS). The Extracellular portion of the chain corresponds to 216-229 (VYGTRKYDNTAQWR). Residues 230 to 250 (VPLGLCFLWALIIIIGMLLVP) traverse the membrane as a helical segment. Topologically, residues 251 to 333 (ESPRYLIECE…VQTFLQLTGE (83 aa)) are cytoplasmic. Residues 334 to 350 (NYFFFYGTTIFKSVGLT) traverse the membrane as a helical segment. At 351–356 (DGFETS) the chain is on the extracellular side. The chain crosses the membrane as a helical span at residues 357–374 (IVLGTVNFFSTIIAVMVV). Topologically, residues 375 to 381 (DKIGRRK) are cytoplasmic. The chain crosses the membrane as a helical span at residues 382–402 (CLLFGAAGMMACMVIFASIGV). Residues 403 to 424 (KCLYPHGQDGPSSKGAGNAMIV) are Extracellular-facing. The helical transmembrane segment at 425-445 (FTCFYIFCFATTWAPVAYIVV) threads the bilayer. The Cytoplasmic segment spans residues 446-462 (AESFPSKVKSRAMSIST). A helical membrane pass occupies residues 463-483 (ACNWLWQFLIGFFTPFITGSI). His484 is a topological domain (extracellular). The helical transmembrane segment at 485–505 (FYYGYVFVGCLVAMFLYVFFF) threads the bilayer. The Cytoplasmic portion of the chain corresponds to 506–564 (LPETIGLSLEEIQLLYEEGIKPWKSASWVPPSRRGISSEESKTEKKDWKKFLKFSKNSD). Positions 530–551 (SASWVPPSRRGISSEESKTEKK) are disordered. The segment covering 541 to 551 (ISSEESKTEKK) has biased composition (basic and acidic residues).

The protein belongs to the major facilitator superfamily. Sugar transporter (TC 2.A.1.1) family.

It localises to the membrane. Its function is as follows. Probable glucose transporter. This chain is Hexose transporter HXT13 (HXT13), found in Saccharomyces cerevisiae (strain ATCC 204508 / S288c) (Baker's yeast).